The following is a 277-amino-acid chain: SF-assemblin (277 aa).

The tract at residues 1-20 (MATSGMVSPTSGRPFSPMRS) is disordered. Positions 1–27 (MATSGMVSPTSGRPFSPMRSSVLTTTG) are nonhelical region. The tract at residues 28-277 (SAIKLEHVSE…KMVNMQHNSA (250 aa)) is rod. Residues 70–90 (RLEKSMEAEVKRRAESDKQLQ) adopt a coiled-coil conformation.

It belongs to the SF-assemblin family. In terms of processing, the N-terminus is blocked.

The protein localises to the cytoplasm. Its subcellular location is the cytoskeleton. Functionally, major component of the striated microtubule-associated fibers (SMAFs; system-I-fibers). The chain is SF-assemblin from Dunaliella bioculata (Green alga).